We begin with the raw amino-acid sequence, 273 residues long: Urease accessory protein UreD (273 aa).

Belongs to the UreD family. In terms of assembly, ureD, UreF and UreG form a complex that acts as a GTP-hydrolysis-dependent molecular chaperone, activating the urease apoprotein by helping to assemble the nickel containing metallocenter of UreC. The UreE protein probably delivers the nickel.

The protein resides in the cytoplasm. Required for maturation of urease via the functional incorporation of the urease nickel metallocenter. This chain is Urease accessory protein UreD, found in Rhizobium leguminosarum bv. trifolii (strain WSM2304).